Here is a 575-residue protein sequence, read N- to C-terminus: Probable lysosomal cobalamin transporter (575 aa).

5 consecutive transmembrane segments (helical) span residues 8-28 (LIWV…SVFI), 46-66 (IVAI…VALV), 95-115 (LVYY…VPFV), 144-164 (YTLS…FVPI), and 188-208 (ALTF…ALHT). N233 carries an N-linked (GlcNAc...) asparagine glycan. 4 consecutive transmembrane segments (helical) span residues 314-334 (LVGL…ILTA), 376-396 (AIFT…IATV), 420-440 (VMTA…SMIV), and 504-524 (FGAI…LALI). The span at 537–549 (QLDEDAEEAEEEA) shows a compositional bias: acidic residues. The tract at residues 537–556 (QLDEDAEEAEEEALLSGSRR) is disordered.

The protein belongs to the LIMR family. LMBRD1 subfamily.

It localises to the lysosome membrane. Functionally, probable lysosomal cobalamin transporter. Required to export cobalamin from lysosomes allowing its conversion to cofactors. The chain is Probable lysosomal cobalamin transporter from Emericella nidulans (strain FGSC A4 / ATCC 38163 / CBS 112.46 / NRRL 194 / M139) (Aspergillus nidulans).